The primary structure comprises 650 residues: 1-deoxy-D-xylulose-5-phosphate synthase (650 aa).

Thiamine diphosphate contacts are provided by residues His-73 and 113-115; that span reads SHA. Asp-145 is a Mg(2+) binding site. Thiamine diphosphate contacts are provided by residues 146-147, Asn-175, Tyr-287, and Glu-369; that span reads GA. A Mg(2+)-binding site is contributed by Asn-175.

The protein belongs to the transketolase family. DXPS subfamily. In terms of assembly, homodimer. It depends on Mg(2+) as a cofactor. The cofactor is thiamine diphosphate.

It carries out the reaction D-glyceraldehyde 3-phosphate + pyruvate + H(+) = 1-deoxy-D-xylulose 5-phosphate + CO2. The protein operates within metabolic intermediate biosynthesis; 1-deoxy-D-xylulose 5-phosphate biosynthesis; 1-deoxy-D-xylulose 5-phosphate from D-glyceraldehyde 3-phosphate and pyruvate: step 1/1. In terms of biological role, catalyzes the acyloin condensation reaction between C atoms 2 and 3 of pyruvate and glyceraldehyde 3-phosphate to yield 1-deoxy-D-xylulose-5-phosphate (DXP). This Leifsonia xyli subsp. xyli (strain CTCB07) protein is 1-deoxy-D-xylulose-5-phosphate synthase.